We begin with the raw amino-acid sequence, 219 residues long: Octanoyltransferase (219 aa).

The BPL/LPL catalytic domain maps to 37–219; it reads EHSPDQLWIL…DFNDVQVILQ (183 aa). Substrate contacts are provided by residues 76 to 83, 143 to 145, and 156 to 158; these read RGGQVTWH, SLG, and GLA. Catalysis depends on C174, which acts as the Acyl-thioester intermediate.

The protein belongs to the LipB family.

Its subcellular location is the cytoplasm. It catalyses the reaction octanoyl-[ACP] + L-lysyl-[protein] = N(6)-octanoyl-L-lysyl-[protein] + holo-[ACP] + H(+). Its pathway is protein modification; protein lipoylation via endogenous pathway; protein N(6)-(lipoyl)lysine from octanoyl-[acyl-carrier-protein]: step 1/2. Its function is as follows. Catalyzes the transfer of endogenously produced octanoic acid from octanoyl-acyl-carrier-protein onto the lipoyl domains of lipoate-dependent enzymes. Lipoyl-ACP can also act as a substrate although octanoyl-ACP is likely to be the physiological substrate. This is Octanoyltransferase from Acinetobacter baylyi (strain ATCC 33305 / BD413 / ADP1).